Here is a 229-residue protein sequence, read N- to C-terminus: MINHPEIIVIFPAAGIGKRMGYKYPKQYIKIKNKTILEHSISLFIDKIYVKKILIAINKKDYWFNKLSILKNKKINIVIGGKSRTESVISALKFVSKVDWVLVHDAVRPCLHKNDLNKLLKVINISPFGAILAAPIYDTVKKSYGNFISHTIKRNKLWRALTPQLFNLKILINCLKIITSKGEIITDESSALEKCGYKLNLVHGRSDNIKITYPEDLNFANFFINNIKE.

This sequence belongs to the IspD/TarI cytidylyltransferase family. IspD subfamily. Homodimer.

It carries out the reaction 2-C-methyl-D-erythritol 4-phosphate + CTP + H(+) = 4-CDP-2-C-methyl-D-erythritol + diphosphate. The protein operates within isoprenoid biosynthesis; isopentenyl diphosphate biosynthesis via DXP pathway; isopentenyl diphosphate from 1-deoxy-D-xylulose 5-phosphate: step 2/6. In terms of biological role, catalyzes the formation of 4-diphosphocytidyl-2-C-methyl-D-erythritol from CTP and 2-C-methyl-D-erythritol 4-phosphate (MEP). The polypeptide is 2-C-methyl-D-erythritol 4-phosphate cytidylyltransferase (Wigglesworthia glossinidia brevipalpis).